A 463-amino-acid polypeptide reads, in one-letter code: Methionine aminopeptidase 2-1 (463 aa).

The span at 1 to 12 (MGSKTPDGHRQG) shows a compositional bias: basic and acidic residues. The interval 1–96 (MGSKTPDGHR…SGQQTTPPRV (96 aa)) is disordered. The span at 41-53 (SGEDDEDGDDDEE) shows a compositional bias: acidic residues. Polar residues predominate over residues 58–67 (DLNSRAQPNN). Positions 70–85 (KKRKRKNNKKKKKKRP) are enriched in basic residues. Residue histidine 215 participates in substrate binding. Aspartate 236, aspartate 247, and histidine 316 together coordinate a divalent metal cation. Histidine 324 contributes to the substrate binding site. The a divalent metal cation site is built by glutamate 349 and glutamate 444.

This sequence belongs to the peptidase M24A family. Methionine aminopeptidase eukaryotic type 2 subfamily. Requires Co(2+) as cofactor. Zn(2+) is required as a cofactor. The cofactor is Mn(2+). It depends on Fe(2+) as a cofactor.

The protein resides in the cytoplasm. The catalysed reaction is Release of N-terminal amino acids, preferentially methionine, from peptides and arylamides.. In terms of biological role, cotranslationally removes the N-terminal methionine from nascent proteins. The N-terminal methionine is often cleaved when the second residue in the primary sequence is small and uncharged (Met-Ala-, Cys, Gly, Pro, Ser, Thr, or Val). The polypeptide is Methionine aminopeptidase 2-1 (Arthroderma otae (strain ATCC MYA-4605 / CBS 113480) (Microsporum canis)).